Reading from the N-terminus, the 129-residue chain is ATP synthase epsilon chain (129 aa).

The protein belongs to the ATPase epsilon chain family. As to quaternary structure, F-type ATPases have 2 components, CF(1) - the catalytic core - and CF(0) - the membrane proton channel. CF(1) has five subunits: alpha(3), beta(3), gamma(1), delta(1), epsilon(1). CF(0) has three main subunits: a, b and c.

The protein resides in the cell inner membrane. Its function is as follows. Produces ATP from ADP in the presence of a proton gradient across the membrane. This Nitratiruptor sp. (strain SB155-2) protein is ATP synthase epsilon chain.